Reading from the N-terminus, the 344-residue chain is S-adenosylmethionine:tRNA ribosyltransferase-isomerase (344 aa).

The protein belongs to the QueA family. In terms of assembly, monomer.

Its subcellular location is the cytoplasm. The catalysed reaction is 7-aminomethyl-7-carbaguanosine(34) in tRNA + S-adenosyl-L-methionine = epoxyqueuosine(34) in tRNA + adenine + L-methionine + 2 H(+). The protein operates within tRNA modification; tRNA-queuosine biosynthesis. In terms of biological role, transfers and isomerizes the ribose moiety from AdoMet to the 7-aminomethyl group of 7-deazaguanine (preQ1-tRNA) to give epoxyqueuosine (oQ-tRNA). This is S-adenosylmethionine:tRNA ribosyltransferase-isomerase from Levilactobacillus brevis (strain ATCC 367 / BCRC 12310 / CIP 105137 / JCM 1170 / LMG 11437 / NCIMB 947 / NCTC 947) (Lactobacillus brevis).